The chain runs to 374 residues: Trehalose-phosphate phosphatase B (374 aa).

Belongs to the trehalose phosphatase family. A divalent metal cation is required as a cofactor. Expressed in flowers.

It carries out the reaction alpha,alpha-trehalose 6-phosphate + H2O = alpha,alpha-trehalose + phosphate. It participates in glycan biosynthesis; trehalose biosynthesis. In terms of biological role, removes the phosphate from trehalose 6-phosphate to produce free trehalose. Trehalose accumulation in plant may improve abiotic stress tolerance. This is Trehalose-phosphate phosphatase B (TPPB) from Arabidopsis thaliana (Mouse-ear cress).